A 1193-amino-acid chain; its full sequence is MYIKQIRLKGFRTYKNETTIDFTRGINCIVGFNGSGKSNILLAIEFILSDVCEYKQIYLHEGIGNAVRNCYVEIIFDNSEKYFSMFKESEIKIKKVLENMKCEIFVNDKNISKNQYVELLESCGLCINNLYNIIKQGQIIKLSNMKDEEILNYLKSILGAKIFEEKKKDALSMLKECDSKKVTIEKEFNDMNSKLESLQEEFENFLEYKKLEKEKVHLDYFLNEINYKNIYEETQMLKSKLQELKNKTQDEDNHLNLSNNNKSEYNEKLNKMKLEIASCQNHLNKTISEDIQNKRNIVHLQMLIDEKIKEKNIKESQNKNRIKNINQINEFILRVNEKLQSLKSDIVSKEKQIENKNNEINMLLSKNKNKNTDANYSHNVKKIEKMINDINIELSFLEKETIKNEKYLKELEEESKVLNKSIKENETLSQKYGSEINELNNKSEKCVEQKRQCQQKISEGTTNLNEIKCQIIEVNDKYDEIIKSSNKEILKIVDLIMAEKSIKRENILGFLIDNINVDKTYVKAVDTILENHYFTLIVEDMQTAKKIVEFIEKKREERTSKEFNFKEFYFGKLTIVPLLNIKKFNEFNYPNDKNIVPLIKCVNYNSKIYEFLKNILFKTIIVKSLESCENYLEDNYNCVNIDGDYLSKHGFMYGGYNKKKYGIYTVYNKLKELKEEEKKEKSHIEELNNNIEKIDDELRNIYDTKSSTVAKKNGCASTINSINNNIYSNEENIRLTSEKINYIQEKKQNLEQHKDQLKMQILQLRNNNVNPDESEKVGSTDINSLNDEVKKLKEELNKIRNEYDDFKNKLELLYQKRNENDSSIYMEEYEDVDIDEYNNDLADKKDHSDKIEKEKIHYEQKIREINKEMENVKSSIDKILINEKKHKKKILDLCHQMNQINEELRILEGKEENIRKKKVLLPQGIQELEEYRTYDKQQLSAKLKSVTMELKKYSNVNEKAGDRLNILMNDFNELKKRHEEINSSHKNIKDMIQHIGKKKDEALEATYVKINKYFSEYFSLLFKNRKASLVLKKMNEKEYKEKLQEMSEKRIKRRIIDEEVYIDKITGISINITSNDDEKMTYTIQELSGGERSIVAICLFLCLNKIDNFSFFFFDEIDAALDTIHRDNLSLLLKELAHRGTQFIITTFRKELLEYSDNMYIVKIVDRESYISKGTKNEAYEIISIEEKHALEN.

An ATP-binding site is contributed by 31 to 38; it reads GFNGSGKS. K101 is subject to N6-acetyllysine. 2 coiled-coil regions span residues 179–286 and 332–483; these read SKKV…LNKT and ILRV…EIIK. An SMC hinge domain is found at 505-631; sequence ENILGFLIDN…VKSLESCENY (127 aa). Residues 665-993 adopt a coiled-coil conformation; the sequence is TVYNKLKELK…SHKNIKDMIQ (329 aa).

It belongs to the SMC family. SMC3 subfamily. In terms of assembly, component of the cohesin complex. Post-translationally, acetylation at Lys-101 by ESCO1 is important for genome stability and S phase sister chromatid cohesion.

The protein resides in the nucleus. Functionally, central component of cohesin, a complex required for chromosome cohesion during the cell cycle. The cohesin complex may form a large proteinaceous ring within which sister chromatids can be trapped. At anaphase, the complex is cleaved and dissociates from chromatin, allowing sister chromatids to segregate. Cohesion is coupled to DNA replication and is involved in DNA repair. The cohesin complex also plays an important role in spindle pole assembly during mitosis and in chromosomes movement. The sequence is that of Structural maintenance of chromosomes protein 3 homolog from Plasmodium falciparum (isolate 3D7).